A 100-amino-acid chain; its full sequence is NADH-quinone oxidoreductase subunit K (100 aa).

The next 3 membrane-spanning stretches (helical) occupy residues 4-24 (TSYY…GVLL), 29-49 (IVIF…LVAF), and 61-81 (IVFF…ALLV).

The protein belongs to the complex I subunit 4L family. As to quaternary structure, NDH-1 is composed of 14 different subunits. Subunits NuoA, H, J, K, L, M, N constitute the membrane sector of the complex.

It is found in the cell membrane. It carries out the reaction a quinone + NADH + 5 H(+)(in) = a quinol + NAD(+) + 4 H(+)(out). NDH-1 shuttles electrons from NADH, via FMN and iron-sulfur (Fe-S) centers, to quinones in the respiratory chain. The immediate electron acceptor for the enzyme in this species is believed to be ubiquinone. Couples the redox reaction to proton translocation (for every two electrons transferred, four hydrogen ions are translocated across the cytoplasmic membrane), and thus conserves the redox energy in a proton gradient. The chain is NADH-quinone oxidoreductase subunit K from Chloroflexus aggregans (strain MD-66 / DSM 9485).